The following is a 510-amino-acid chain: NAD(P)H-quinone oxidoreductase subunit 2 A, chloroplastic (510 aa).

Helical transmembrane passes span 24–44, 57–77, 99–119, 124–144, 149–169, 183–203, 229–249, 295–315, 323–343, 354–374, 395–415, 418–438, and 484–504; these read LLLF…GLIL, TPWL…ALLF, IFQF…VEYI, MAIT…MFLC, LITI…LSGY, YLLM…WLYG, ISIA…PAPF, WHLL…LIAI, MLAY…IVGD, YMLF…LFGL, ALSS…AGFF, LYLF…IGLL, and MIVC…IIAI.

The protein belongs to the complex I subunit 2 family. NDH is composed of at least 16 different subunits, 5 of which are encoded in the nucleus.

The protein resides in the plastid. Its subcellular location is the chloroplast thylakoid membrane. The catalysed reaction is a plastoquinone + NADH + (n+1) H(+)(in) = a plastoquinol + NAD(+) + n H(+)(out). It carries out the reaction a plastoquinone + NADPH + (n+1) H(+)(in) = a plastoquinol + NADP(+) + n H(+)(out). Functionally, NDH shuttles electrons from NAD(P)H:plastoquinone, via FMN and iron-sulfur (Fe-S) centers, to quinones in the photosynthetic chain and possibly in a chloroplast respiratory chain. The immediate electron acceptor for the enzyme in this species is believed to be plastoquinone. Couples the redox reaction to proton translocation, and thus conserves the redox energy in a proton gradient. This Nuphar advena (Common spatterdock) protein is NAD(P)H-quinone oxidoreductase subunit 2 A, chloroplastic.